A 230-amino-acid chain; its full sequence is tRNA (guanine-N(1)-)-methyltransferase (230 aa).

Residues Gly114 and 138-143 (IGDYVL) each bind S-adenosyl-L-methionine.

It belongs to the RNA methyltransferase TrmD family. As to quaternary structure, homodimer.

Its subcellular location is the cytoplasm. It carries out the reaction guanosine(37) in tRNA + S-adenosyl-L-methionine = N(1)-methylguanosine(37) in tRNA + S-adenosyl-L-homocysteine + H(+). In terms of biological role, specifically methylates guanosine-37 in various tRNAs. This is tRNA (guanine-N(1)-)-methyltransferase from Rhodococcus jostii (strain RHA1).